We begin with the raw amino-acid sequence, 461 residues long: D-arabinono-1,4-lactone oxidase (461 aa).

The FAD-binding PCMH-type domain occupies 24–194 (FSAISLGLRC…VDITISVVPA (171 aa)). Residue His-61 is modified to Pros-8alpha-FAD histidine.

Belongs to the oxygen-dependent FAD-linked oxidoreductase family. FAD is required as a cofactor.

Its subcellular location is the mitochondrion membrane. It catalyses the reaction D-arabinono-1,4-lactone + O2 = dehydro-D-arabinono-1,4-lactone + H2O2 + H(+). The protein operates within cofactor biosynthesis; D-erythroascorbate biosynthesis; dehydro-D-arabinono-1,4-lactone from D-arabinose: step 2/2. The chain is D-arabinono-1,4-lactone oxidase (alo1) from Schizosaccharomyces pombe (strain 972 / ATCC 24843) (Fission yeast).